Reading from the N-terminus, the 666-residue chain is Fructose-1,6-bisphosphatase class 3 (666 aa).

This sequence belongs to the FBPase class 3 family. Requires Mn(2+) as cofactor.

The catalysed reaction is beta-D-fructose 1,6-bisphosphate + H2O = beta-D-fructose 6-phosphate + phosphate. It participates in carbohydrate biosynthesis; gluconeogenesis. In Parabacteroides distasonis (strain ATCC 8503 / DSM 20701 / CIP 104284 / JCM 5825 / NCTC 11152), this protein is Fructose-1,6-bisphosphatase class 3.